The following is a 210-amino-acid chain: Guanylate kinase (210 aa).

Positions 5-183 constitute a Guanylate kinase-like domain; the sequence is GILFVISAPS…AVEEFKSIIL (179 aa). 12–19 contacts ATP; it reads APSGAGKT.

Belongs to the guanylate kinase family.

The protein localises to the cytoplasm. It catalyses the reaction GMP + ATP = GDP + ADP. Functionally, essential for recycling GMP and indirectly, cGMP. The protein is Guanylate kinase of Syntrophotalea carbinolica (strain DSM 2380 / NBRC 103641 / GraBd1) (Pelobacter carbinolicus).